The sequence spans 1157 residues: ATP-dependent helicase/deoxyribonuclease subunit B (1157 aa).

The UvrD-like helicase ATP-binding domain occupies 1 to 277; it reads MTLQIIAGKS…KLFLENKRAK (277 aa). ATP is bound at residue 8 to 15; the sequence is GKSGTGKT. Residues 272–578 form the UvrD-like helicase C-terminal domain; that stretch reads ENKRAKSDSL…EFSLLPPSLD (307 aa). Residues C794, C1115, C1118, and C1124 each coordinate [4Fe-4S] cluster.

Belongs to the helicase family. AddB/RexB type 1 subfamily. Heterodimer of AddA and AddB. It depends on Mg(2+) as a cofactor. The cofactor is [4Fe-4S] cluster.

In terms of biological role, the heterodimer acts as both an ATP-dependent DNA helicase and an ATP-dependent, dual-direction single-stranded exonuclease. Recognizes the chi site generating a DNA molecule suitable for the initiation of homologous recombination. The AddB subunit has 5' -&gt; 3' nuclease activity but not helicase activity. The polypeptide is ATP-dependent helicase/deoxyribonuclease subunit B (Listeria welshimeri serovar 6b (strain ATCC 35897 / DSM 20650 / CCUG 15529 / CIP 8149 / NCTC 11857 / SLCC 5334 / V8)).